The following is a 207-amino-acid chain: MKGQLFVICGPSGAGKTSIIKEVLKRLDNVVFSVSCTTRPKRPHEEDGKDYFFITEEEFLKRVERGEFLEWARVHGHLYGTLRSFVESHINEGKDVVLDIDVQGALSVKKKYSNTVFIYVAPPSYADLRERILKRGTEKEADVLVRLENAKWELMFMDEFDYIVVNENLEDAVEMVVSIVRSERAKVTRNQDKIERFKMEVKGWKKL.

The 179-residue stretch at 3 to 181 (GQLFVICGPS…AVEMVVSIVR (179 aa)) folds into the Guanylate kinase-like domain. 10-17 (GPSGAGKT) provides a ligand contact to ATP.

The protein belongs to the guanylate kinase family.

Its subcellular location is the cytoplasm. It carries out the reaction GMP + ATP = GDP + ADP. Its function is as follows. Essential for recycling GMP and indirectly, cGMP. This Thermotoga maritima (strain ATCC 43589 / DSM 3109 / JCM 10099 / NBRC 100826 / MSB8) protein is Guanylate kinase (gmk).